The primary structure comprises 166 residues: Cytochrome P450 regulator dap1 (166 aa).

The helical transmembrane segment at 4–21 threads the bilayer; it reads TQVVFIVTLFLYLLITRW. The region spanning 42 to 145 is the Cytochrome b5 heme-binding domain; it reads DYTPAELKEY…QKYQAVGRLI (104 aa). A Phosphoserine modification is found at Ser108. Position 138 (Tyr138) interacts with heme.

It belongs to the cytochrome b5 family. MAPR subfamily. Interacts with erg5 and erg11.

Its subcellular location is the endoplasmic reticulum. The protein localises to the membrane. Functionally, required for sterol biosynthesis. Functions as a positive regulator of cytochrome P450 enzymes erg5 and erg11. Function requires bound heme. The sequence is that of Cytochrome P450 regulator dap1 (dap1) from Schizosaccharomyces pombe (strain 972 / ATCC 24843) (Fission yeast).